We begin with the raw amino-acid sequence, 195 residues long: Pyridoxal 5'-phosphate synthase subunit PdxT (195 aa).

46–48 is an L-glutamine binding site; that stretch reads GES. Cys-78 acts as the Nucleophile in catalysis. L-glutamine contacts are provided by residues Arg-107 and 136–137; that span reads IR. Active-site charge relay system residues include His-173 and Glu-175.

This sequence belongs to the glutaminase PdxT/SNO family. In terms of assembly, in the presence of PdxS, forms a dodecamer of heterodimers. Only shows activity in the heterodimer.

The enzyme catalyses aldehydo-D-ribose 5-phosphate + D-glyceraldehyde 3-phosphate + L-glutamine = pyridoxal 5'-phosphate + L-glutamate + phosphate + 3 H2O + H(+). It carries out the reaction L-glutamine + H2O = L-glutamate + NH4(+). It participates in cofactor biosynthesis; pyridoxal 5'-phosphate biosynthesis. Functionally, catalyzes the hydrolysis of glutamine to glutamate and ammonia as part of the biosynthesis of pyridoxal 5'-phosphate. The resulting ammonia molecule is channeled to the active site of PdxS. In Dehalococcoides mccartyi (strain CBDB1), this protein is Pyridoxal 5'-phosphate synthase subunit PdxT.